A 194-amino-acid polypeptide reads, in one-letter code: Ion-translocating oxidoreductase complex subunit B (194 aa).

A hydrophobic region spans residues 1 to 26; the sequence is MSGVLIAVAALLALAAVFGAVLGFAS. One can recognise a 4Fe-4S domain in the interval 32-90; the sequence is EGDPIVDQIDSLLPQTQCGQCGHPGCRPYAEAIAEGEEHNRCPPGGQDTVVALSELLGR. Residues cysteine 49, cysteine 52, cysteine 57, cysteine 73, cysteine 116, cysteine 119, cysteine 122, cysteine 126, cysteine 146, cysteine 149, cysteine 152, and cysteine 156 each contribute to the [4Fe-4S] cluster site. 2 consecutive 4Fe-4S ferredoxin-type domains span residues 107–136 and 137–166; these read KVAY…GAAK and LMHT…MLEV.

It belongs to the 4Fe4S bacterial-type ferredoxin family. RnfB subfamily. As to quaternary structure, the complex is composed of six subunits: RnfA, RnfB, RnfC, RnfD, RnfE and RnfG. It depends on [4Fe-4S] cluster as a cofactor.

It localises to the cell inner membrane. In terms of biological role, part of a membrane-bound complex that couples electron transfer with translocation of ions across the membrane. This Alcanivorax borkumensis (strain ATCC 700651 / DSM 11573 / NCIMB 13689 / SK2) protein is Ion-translocating oxidoreductase complex subunit B.